A 210-amino-acid chain; its full sequence is T-cell antigen CD7 (210 aa).

Positions M1–A23 are cleaved as a signal peptide. An Ig-like domain is found at Q24 to K129. Topologically, residues Q24 to P150 are extracellular. N-linked (GlcNAc...) asparagine glycans are attached at residues N42, N86, and N93. A disulfide bridge connects residues C45 and C111. The chain crosses the membrane as a helical span at residues A151–L171. A lipid anchor (S-palmitoyl cysteine) is attached at C168. Topologically, residues R172–Q210 are cytoplasmic.

In terms of assembly, interacts with SECTM1.

Its subcellular location is the membrane. Transmembrane glycoprotein expressed by T-cells and natural killer (NK) cells and their precursors. Plays a costimulatory role in T-cell activation upon binding to its ligand K12/SECTM1. In turn, mediates the production of cytokines such as IL-2. On resting NK-cells, CD7 activation results in a significant induction of gamma-interferon levels. This is T-cell antigen CD7 (Cd7) from Mus musculus (Mouse).